A 209-amino-acid polypeptide reads, in one-letter code: Aspartate kinase-like protein lolA1 (209 aa).

Residues 1-11 show a composition bias toward basic and acidic residues; sequence MLDESPMRKGD. The interval 1–27 is disordered; sequence MLDESPMRKGDSVSNDQSNPESNASVS. A compositionally biased stretch (polar residues) spans 12–27; sequence SVSNDQSNPESNASVS.

It belongs to the aspartokinase family.

The protein operates within alkaloid biosynthesis. Aspartokinase-like protein; part of the gene cluster that mediates the biosynthesis of loline alkaloids, potent insecticidal agents composed of a pyrrolizidine ring system and an uncommon ether bridge linking carbons 2 and 7. Lolines are structurally differentiated by the various modifications of the L-amino group and include norloline, loline, N-methylloline, N-acetylloline, N-acetylnorloline, and N-formylloline. The first committed step is the condensation of O-acetyl-L-homoserine (derived from L-aspartic acid) and L-proline, probably catalyzed by the gamma-type pyridoxal 5'-phosphate(PLP)-dependent enzyme lolC, to give the diamino diacid, NACPP. Ensuing cyclization, decarboxylation, and acetylation steps yield 1-exo-acetamidopyrrolizidine (AcAP). LolO is required for installation of the ether bridge upon the pathway intermediate, 1-exo-acetamidopyrrolizidine (AcAP). In sequential 2-oxoglutarate- and O(2)-consuming steps, lolO removes hydrogens from C2 and C7 of AcAP to form both carbon-oxygen bonds in N-acetylnorloline (NANL), the precursor to all other lolines. The enzymes lolD, lolE, lolF and lolT have also been proposed to be involved in the ether-bridge installation. Further processing of the exocyclic moiety of NANL by fungal N-acetamidase (LolN), methyltransferase (LolM), and cytochrome P450 (LolP) enzymes, with occasional involvement of a plant acetyltransferase, generates the other known lolines. LolN transforms NANL to norlonine which is monomethylated and dimethylated to respectively lonine and N-methyllonine (NML) by lolM. LolP catalyzes hydroxylation of the methyl group in N-methylloline (NML) and further oxygenation to N-formylloline (NFL). A plant acetyltransferase is responsible for the acetylation of loline to form N-acetylloline (NAL). LolA might interact with aspartate kinase to prevent feedback inhibition of its activity by these end products and thereby promote production of L-homoserine from L-aspartate. This is Aspartate kinase-like protein lolA1 from Epichloe uncinata (Endophyte fungus).